A 77-amino-acid polypeptide reads, in one-letter code: Small integral membrane protein 5 (77 aa).

Residues 32–52 (IVAFSVIILFTATVLLLLLIA) form a helical membrane-spanning segment.

The protein resides in the membrane. This chain is Small integral membrane protein 5 (SMIM5), found in Homo sapiens (Human).